The chain runs to 311 residues: Ribosomal RNA small subunit methyltransferase H 1 (311 aa).

Residues Ala-33–His-35, Asp-53, Phe-80, Asp-101, and Gln-108 each bind S-adenosyl-L-methionine.

The protein belongs to the methyltransferase superfamily. RsmH family.

It localises to the cytoplasm. It catalyses the reaction cytidine(1402) in 16S rRNA + S-adenosyl-L-methionine = N(4)-methylcytidine(1402) in 16S rRNA + S-adenosyl-L-homocysteine + H(+). Its function is as follows. Specifically methylates the N4 position of cytidine in position 1402 (C1402) of 16S rRNA. The polypeptide is Ribosomal RNA small subunit methyltransferase H 1 (Alkaliphilus metalliredigens (strain QYMF)).